Reading from the N-terminus, the 214-residue chain is ATP-dependent Clp protease proteolytic subunit (214 aa).

The active-site Nucleophile is the Ser-113. His-138 is a catalytic residue.

Belongs to the peptidase S14 family. As to quaternary structure, fourteen ClpP subunits assemble into 2 heptameric rings which stack back to back to give a disk-like structure with a central cavity, resembling the structure of eukaryotic proteasomes.

Its subcellular location is the cytoplasm. It carries out the reaction Hydrolysis of proteins to small peptides in the presence of ATP and magnesium. alpha-casein is the usual test substrate. In the absence of ATP, only oligopeptides shorter than five residues are hydrolyzed (such as succinyl-Leu-Tyr-|-NHMec, and Leu-Tyr-Leu-|-Tyr-Trp, in which cleavage of the -Tyr-|-Leu- and -Tyr-|-Trp bonds also occurs).. Cleaves peptides in various proteins in a process that requires ATP hydrolysis. Has a chymotrypsin-like activity. Plays a major role in the degradation of misfolded proteins. This Alkalilimnicola ehrlichii (strain ATCC BAA-1101 / DSM 17681 / MLHE-1) protein is ATP-dependent Clp protease proteolytic subunit.